A 1077-amino-acid chain; its full sequence is Receptor-like protein 1 (1077 aa).

The signal sequence occupies residues 1 to 38; that stretch reads MRTDERRRWWVKPKKHITLVFITITMIIQFQMKGCVSC. An N-cap region spans residues 39–120; that stretch reads VETERMGLLQ…SQTRSLNLSL (82 aa). Residues 39–1024 are Extracellular-facing; the sequence is VETERMGLLQ…NEEEGNVIDM (986 aa). N-linked (GlcNAc...) asparagine glycosylation is found at N117, N131, and N139. 12 LRR repeats span residues 124–147, 153–176, 177–201, 202–225, 227–250, 251–274, 275–299, 300–324, 326–348, 351–376, 378–397, and 399–424; these read FPQL…FLGF, LDKL…FLNA, ATSI…ELSN, MTNL…GLTD, RDLE…SLST, AKLK…GLES, LQEL…VLKD, LKML…GLEI, TSLQ…YLGI, LMKL…NLTH, RTLD…FVSG, and PSVL…LVNQ. A glycan (N-linked (GlcNAc...) asparagine) is linked at N201. N240 carries N-linked (GlcNAc...) asparagine glycosylation. Residue N289 is glycosylated (N-linked (GlcNAc...) asparagine). N373, N390, and N423 each carry an N-linked (GlcNAc...) asparagine glycan. One copy of the LRR 13; degenerate repeat lies at 425–449; that stretch reads TRLTVFKLSSKVGVIQVQTESSWAP. LRR repeat units follow at residues 450–473, 474–498, 499–522, 524–545, 546–570, 572–594, 595–621, 623–643, 644–666, 667–694, 696–713, 714–737, 739–761, 762–785, 786–808, 877–901, 902–925, 927–949, and 951–970; these read LFQL…FLVH, QRDL…LVKN, NTRL…ILVH, LQVL…IGMV, FPNL…IGEM, SLQV…FLSG, CYSL…NLTG, VGLF…LLKS, KNLT…WIGR, ISRL…PWVE, MDIS…NVNF, PSLR…LFKA, GLEV…IDQT, SKLR…ICQL, SEVG…CFSK, LRYM…IGDL, QNIR…ISKL, GLES…LADL, and SLGY…PFKG. Residues N460 and N498 are each glycosylated (N-linked (GlcNAc...) asparagine). Residue N553 is glycosylated (N-linked (GlcNAc...) asparagine). N-linked (GlcNAc...) asparagine glycosylation is found at N618, N631, and N645. N-linked (GlcNAc...) asparagine glycosylation is found at N749 and N771. A glycan (N-linked (GlcNAc...) asparagine) is linked at N908. N956 and N961 each carry an N-linked (GlcNAc...) asparagine glycan. The C-cap/acidic domain stretch occupies residues 971-1024; the sequence is HLVTFDERSYIGNAHLCGLPTNKNCISQRVPEPPSVSTHAKEEENEEEGNVIDM. A helical transmembrane segment spans residues 1025–1045; that stretch reads VWFYWTCAAVYISTSLALFAF. The Cytoplasmic segment spans residues 1046–1077; sequence LYIDSRWSREWFYRVDLCVHHILQFKRSSVCN.

This sequence belongs to the RLP family.

The protein localises to the cell membrane. Involved in plant defense. Confers resistance to the bacterial pathogen Xanthomonas through recognition of the microbe-associated molecular pattern (MAMP) eMax. Functionality seems to depend on the presence of the receptor kinase SOBIR1 as an adapter protein. In Arabidopsis thaliana (Mouse-ear cress), this protein is Receptor-like protein 1.